A 91-amino-acid polypeptide reads, in one-letter code: Large ribosomal subunit protein bL27 (91 aa).

The disordered stretch occupies residues 1 to 22; it reads MAHKKAGGSSRNGRDSDGRRLG.

It belongs to the bacterial ribosomal protein bL27 family.

The chain is Large ribosomal subunit protein bL27 from Beijerinckia indica subsp. indica (strain ATCC 9039 / DSM 1715 / NCIMB 8712).